A 509-amino-acid chain; its full sequence is Kelch repeat protein M-T9 (509 aa).

A BTB domain is found at 15 to 79 (SDVTVVAGDS…MYAGCDGLND (65 aa)). 5 Kelch repeats span residues 274-320 (VLYC…IVNG), 321-368 (YIYV…YRNE), 370-415 (WIVG…VYNN), 416-463 (RLYC…VYNK), and 465-509 (IYVL…NDEI).

This sequence belongs to the poxviruses Kelch family.

The polypeptide is Kelch repeat protein M-T9 (Myxoma virus (strain Lausanne) (MYXV)).